The primary structure comprises 692 residues: DNA ligase (692 aa).

NAD(+) is bound by residues 40–44 (DAAYD), 89–90 (SL), and E121. The active-site N6-AMP-lysine intermediate is K123. R144, E181, K297, and K321 together coordinate NAD(+). Zn(2+)-binding residues include C415, C417, C439, and C445. One can recognise a BRCT domain in the interval 614-692 (KTDTAVAGKT…EDEWLEMVGS (79 aa)).

It belongs to the NAD-dependent DNA ligase family. LigA subfamily. Mg(2+) is required as a cofactor. It depends on Mn(2+) as a cofactor.

The catalysed reaction is NAD(+) + (deoxyribonucleotide)n-3'-hydroxyl + 5'-phospho-(deoxyribonucleotide)m = (deoxyribonucleotide)n+m + AMP + beta-nicotinamide D-nucleotide.. Functionally, DNA ligase that catalyzes the formation of phosphodiester linkages between 5'-phosphoryl and 3'-hydroxyl groups in double-stranded DNA using NAD as a coenzyme and as the energy source for the reaction. It is essential for DNA replication and repair of damaged DNA. This chain is DNA ligase, found in Phenylobacterium zucineum (strain HLK1).